A 475-amino-acid polypeptide reads, in one-letter code: Aspartyl/glutamyl-tRNA(Asn/Gln) amidotransferase subunit B (475 aa).

Belongs to the GatB/GatE family. GatB subfamily. In terms of assembly, heterotrimer of A, B and C subunits.

The catalysed reaction is L-glutamyl-tRNA(Gln) + L-glutamine + ATP + H2O = L-glutaminyl-tRNA(Gln) + L-glutamate + ADP + phosphate + H(+). The enzyme catalyses L-aspartyl-tRNA(Asn) + L-glutamine + ATP + H2O = L-asparaginyl-tRNA(Asn) + L-glutamate + ADP + phosphate + 2 H(+). Allows the formation of correctly charged Asn-tRNA(Asn) or Gln-tRNA(Gln) through the transamidation of misacylated Asp-tRNA(Asn) or Glu-tRNA(Gln) in organisms which lack either or both of asparaginyl-tRNA or glutaminyl-tRNA synthetases. The reaction takes place in the presence of glutamine and ATP through an activated phospho-Asp-tRNA(Asn) or phospho-Glu-tRNA(Gln). The polypeptide is Aspartyl/glutamyl-tRNA(Asn/Gln) amidotransferase subunit B (Thermodesulfovibrio yellowstonii (strain ATCC 51303 / DSM 11347 / YP87)).